Reading from the N-terminus, the 447-residue chain is Exodeoxyribonuclease 7 large subunit (447 aa).

This sequence belongs to the XseA family. Heterooligomer composed of large and small subunits.

It localises to the cytoplasm. The catalysed reaction is Exonucleolytic cleavage in either 5'- to 3'- or 3'- to 5'-direction to yield nucleoside 5'-phosphates.. Bidirectionally degrades single-stranded DNA into large acid-insoluble oligonucleotides, which are then degraded further into small acid-soluble oligonucleotides. The sequence is that of Exodeoxyribonuclease 7 large subunit from Streptococcus mutans serotype c (strain ATCC 700610 / UA159).